Reading from the N-terminus, the 238-residue chain is Mitochondrial inner membrane protease atp23 (238 aa).

An a divalent metal cation-binding site is contributed by H137. E138 is an active-site residue. H141 contributes to the a divalent metal cation binding site.

The protein belongs to the peptidase M76 family.

Its subcellular location is the mitochondrion inner membrane. Has a dual role in the assembly of mitochondrial ATPase. Acts as a protease that removes N-terminal residues of mitochondrial ATPase CF(0) subunit 6 at the intermembrane space side. Also involved in the correct assembly of the membrane-embedded ATPase CF(0) particle, probably mediating association of subunit 6 with the subunit 9 ring. This Aspergillus oryzae (strain ATCC 42149 / RIB 40) (Yellow koji mold) protein is Mitochondrial inner membrane protease atp23 (atp23).